A 97-amino-acid polypeptide reads, in one-letter code: Acylphosphatase (97 aa).

Residues T9 to E95 form the Acylphosphatase-like domain. Catalysis depends on residues R24 and N42.

This sequence belongs to the acylphosphatase family.

It catalyses the reaction an acyl phosphate + H2O = a carboxylate + phosphate + H(+). In Acidovorax sp. (strain JS42), this protein is Acylphosphatase (acyP).